The sequence spans 385 residues: Fe-S cluster assembly protein DRE2 (385 aa).

Residues 1 to 177 (MTSSINILLL…KKLNKNDMTI (177 aa)) are N-terminal SAM-like domain. The linker stretch occupies residues 178–240 (NVPQEIDNIT…NDLLKYNNHN (63 aa)). The segment at 200–226 (YFSSDDENSSDGSLSDNANEEEEDDDE) is disordered. Positions 217–226 (ANEEEEDDDE) are enriched in acidic residues. 4 residues coordinate [2Fe-2S] cluster: Cys-261, Cys-275, Cys-278, and Cys-280. The fe-S binding site A stretch occupies residues 261-280 (CELSLNGGKKRKKACKDCTC). Residues Cys-348, Cys-351, Cys-359, and Cys-362 each contribute to the [4Fe-4S] cluster site. 2 consecutive short sequence motifs (cx2C motif) follow at residues 348 to 351 (CGSC) and 359 to 362 (CDGC). The interval 348-362 (CGSCALGDAFRCDGC) is fe-S binding site B.

This sequence belongs to the anamorsin family. As to quaternary structure, monomer. Interacts with TAH18. Interacts with MIA40. Requires [2Fe-2S] cluster as cofactor. It depends on [4Fe-4S] cluster as a cofactor.

It is found in the cytoplasm. Its subcellular location is the mitochondrion intermembrane space. Its function is as follows. Component of the cytosolic iron-sulfur (Fe-S) protein assembly (CIA) machinery required for the maturation of extramitochondrial Fe-S proteins. Part of an electron transfer chain functioning in an early step of cytosolic Fe-S biogenesis, facilitating the de novo assembly of a [4Fe-4S] cluster on the scaffold complex CFD1-NBP35. Electrons are transferred to DRE2 from NADPH via the FAD- and FMN-containing protein TAH18. TAH18-DRE2 are also required for the assembly of the diferric tyrosyl radical cofactor of ribonucleotide reductase (RNR), probably by providing electrons for reduction during radical cofactor maturation in the catalytic small subunit RNR2. The chain is Fe-S cluster assembly protein DRE2 from Candida dubliniensis (strain CD36 / ATCC MYA-646 / CBS 7987 / NCPF 3949 / NRRL Y-17841) (Yeast).